We begin with the raw amino-acid sequence, 178 residues long: Inner membrane-spanning protein YciB (178 aa).

Transmembrane regions (helical) follow at residues 1–21, 23–43, 51–71, 77–97, 120–140, and 150–170; these read MKIL…KMTG, IIIA…FTWF, MHLV…LLGD, WKPT…QFIG, LNLA…YVAF, and FKLF…GIYL.

This sequence belongs to the YciB family.

Its subcellular location is the cell inner membrane. In terms of biological role, plays a role in cell envelope biogenesis, maintenance of cell envelope integrity and membrane homeostasis. The protein is Inner membrane-spanning protein YciB of Marinomonas sp. (strain MWYL1).